We begin with the raw amino-acid sequence, 180 residues long: ADP-ribosylation factor 4 (180 aa).

The N-myristoyl glycine moiety is linked to residue G2. GTP is bound by residues 24-31 (GLDAAGKT), 67-71 (DVGGQ), and 126-129 (NKQD). The residue at position 147 (S147) is a Phosphoserine.

The protein belongs to the small GTPase superfamily. Arf family. As to quaternary structure, forms a complex containing RAB11A, ASAP1, RAB3IP, RAP11FIP3 and ARF4; the complex promotes preciliary trafficking; the complex binds to RHO in photoreceptor cells and promotes RHO ciliary transport.

The protein localises to the golgi apparatus. The protein resides in the membrane. Functionally, GTP-binding protein that functions as an allosteric activator of the cholera toxin catalytic subunit, an ADP-ribosyltransferase. Involved in protein trafficking; may modulate vesicle budding and uncoating within the Golgi apparatus. Part of the ciliary targeting complex containing Rab11, ASAP1, Rabin8/RAB3IP, RAB11FIP3 and ARF4, which direct preciliary vesicle trafficking to mother centriole and ciliogenesis initiation. This Bos taurus (Bovine) protein is ADP-ribosylation factor 4 (ARF4).